The chain runs to 320 residues: Delta-aminolevulinic acid dehydratase (320 aa).

Cysteine 119, cysteine 121, and cysteine 129 together coordinate Zn(2+). The Schiff-base intermediate with substrate role is filled by lysine 194. 5-aminolevulinate is bound by residues arginine 204 and arginine 216. Glutamate 232 is a binding site for Mg(2+). Catalysis depends on lysine 247, which acts as the Schiff-base intermediate with substrate. Serine 273 is a 5-aminolevulinate binding site.

This sequence belongs to the ALAD family. Homooctamer. Requires Zn(2+) as cofactor.

The enzyme catalyses 2 5-aminolevulinate = porphobilinogen + 2 H2O + H(+). It participates in porphyrin-containing compound metabolism; protoporphyrin-IX biosynthesis; coproporphyrinogen-III from 5-aminolevulinate: step 1/4. Its function is as follows. Catalyzes an early step in the biosynthesis of tetrapyrroles. Binds two molecules of 5-aminolevulinate per subunit, each at a distinct site, and catalyzes their condensation to form porphobilinogen. The protein is Delta-aminolevulinic acid dehydratase (hemB) of Methanothermus sociabilis.